Reading from the N-terminus, the 231-residue chain is Large ribosomal subunit protein uL1 (231 aa).

It belongs to the universal ribosomal protein uL1 family. Part of the 50S ribosomal subunit.

Functionally, binds directly to 23S rRNA. The L1 stalk is quite mobile in the ribosome, and is involved in E site tRNA release. Protein L1 is also a translational repressor protein, it controls the translation of the L11 operon by binding to its mRNA. The sequence is that of Large ribosomal subunit protein uL1 from Alkalilimnicola ehrlichii (strain ATCC BAA-1101 / DSM 17681 / MLHE-1).